A 280-amino-acid polypeptide reads, in one-letter code: MTTQIFQLPLKYCASSFSSTGQRNYGASSSPSPIVICKSNGISDGLWVKRRKNNRRFGSLIVKQEKGDVTEIRVPVPLTLEQQEKEKQNRDDEEDEIDEGDVDPEDLKYVNEIKRVIELLRRNRDMIFSEVKLTIMIEDPRELERRRLLGIEDADTPSRDDLAEALEQVNDGKIPKDRATLRMLHEEMIRWPNLEVEVSKKQRGKSMYAKSTDTGIDPKEAAKRLNVEWDSAAAIEEVDVDDEQGVVTKVAGYGALYFVSALPVIIGISVVLILFYNSLQ.

Residues 1–62 (MTTQIFQLPL…NNRRFGSLIV (62 aa)) constitute a chloroplast transit peptide. Residues 75-103 (PVPLTLEQQEKEKQNRDDEEDEIDEGDVD) form a disordered region. Acidic residues predominate over residues 91-103 (DDEEDEIDEGDVD). The chain crosses the membrane as a helical span at residues 255–275 (ALYFVSALPVIIGISVVLILF).

Belongs to the Y3IP1/CEST family. As to quaternary structure, interacts with Ycf3. In terms of tissue distribution, expressed in cotyledons, rosette and cauline leaves, stems and sepals.

Its subcellular location is the plastid. The protein localises to the chloroplast thylakoid membrane. Functionally, nuclear genome-encoded factor that participates in photosystem I (PSI) biogenesis. Cooperates with the plastid genome-encoded protein PSI assembly Ycf3 in the assembly of stable PSI units in the thylakoid membrane. Involved in light-induced chloroplast development and growth. Involved in the plant response to abiotic and photooxidative stresses. May be involved in the suppression of photooxidative damage. This chain is Ycf3-interacting protein 1, chloroplastic, found in Arabidopsis thaliana (Mouse-ear cress).